A 439-amino-acid polypeptide reads, in one-letter code: ATP-dependent protease ATPase subunit HslU (439 aa).

ATP is bound by residues Ile-17, 59–64 (GVGKTE), Asp-251, Glu-317, and Arg-389.

This sequence belongs to the ClpX chaperone family. HslU subfamily. A double ring-shaped homohexamer of HslV is capped on each side by a ring-shaped HslU homohexamer. The assembly of the HslU/HslV complex is dependent on binding of ATP.

The protein resides in the cytoplasm. In terms of biological role, ATPase subunit of a proteasome-like degradation complex; this subunit has chaperone activity. The binding of ATP and its subsequent hydrolysis by HslU are essential for unfolding of protein substrates subsequently hydrolyzed by HslV. HslU recognizes the N-terminal part of its protein substrates and unfolds these before they are guided to HslV for hydrolysis. The sequence is that of ATP-dependent protease ATPase subunit HslU from Campylobacter jejuni subsp. jejuni serotype O:2 (strain ATCC 700819 / NCTC 11168).